Here is a 156-residue protein sequence, read N- to C-terminus: Small ribosomal subunit protein uS7 (156 aa).

Belongs to the universal ribosomal protein uS7 family. As to quaternary structure, part of the 30S ribosomal subunit. Contacts proteins S9 and S11.

Functionally, one of the primary rRNA binding proteins, it binds directly to 16S rRNA where it nucleates assembly of the head domain of the 30S subunit. Is located at the subunit interface close to the decoding center, probably blocks exit of the E-site tRNA. This chain is Small ribosomal subunit protein uS7, found in Alkaliphilus oremlandii (strain OhILAs) (Clostridium oremlandii (strain OhILAs)).